A 474-amino-acid chain; its full sequence is ATP synthase subunit beta (474 aa).

ATP is bound at residue Gly-152–Thr-159.

This sequence belongs to the ATPase alpha/beta chains family. In terms of assembly, F-type ATPases have 2 components, CF(1) - the catalytic core - and CF(0) - the membrane proton channel. CF(1) has five subunits: alpha(3), beta(3), gamma(1), delta(1), epsilon(1). CF(0) has four main subunits: a(1), b(1), b'(1) and c(9-12).

The protein resides in the cell inner membrane. The enzyme catalyses ATP + H2O + 4 H(+)(in) = ADP + phosphate + 5 H(+)(out). Its function is as follows. Produces ATP from ADP in the presence of a proton gradient across the membrane. The catalytic sites are hosted primarily by the beta subunits. This chain is ATP synthase subunit beta, found in Rhodospirillum rubrum (strain ATCC 11170 / ATH 1.1.1 / DSM 467 / LMG 4362 / NCIMB 8255 / S1).